A 600-amino-acid polypeptide reads, in one-letter code: UvrABC system protein C (600 aa).

The 78-residue stretch at 15–92 folds into the GIY-YIG domain; that stretch reads DKPGCYLMKD…IKKYQPYYNV (78 aa). In terms of domain architecture, UVR spans 197 to 232; it reads SQVKQDLTEKMTQASMNLEFERAAEFRDQLKYIEQT.

The protein belongs to the UvrC family. As to quaternary structure, interacts with UvrB in an incision complex.

It is found in the cytoplasm. Functionally, the UvrABC repair system catalyzes the recognition and processing of DNA lesions. UvrC both incises the 5' and 3' sides of the lesion. The N-terminal half is responsible for the 3' incision and the C-terminal half is responsible for the 5' incision. This chain is UvrABC system protein C, found in Lactobacillus gasseri (strain ATCC 33323 / DSM 20243 / BCRC 14619 / CIP 102991 / JCM 1131 / KCTC 3163 / NCIMB 11718 / NCTC 13722 / AM63).